The chain runs to 455 residues: Bifunctional protein GlmU (455 aa).

The tract at residues 1–226 is pyrophosphorylase; the sequence is MSLDIVILAA…AMEVQGANDR (226 aa). UDP-N-acetyl-alpha-D-glucosamine-binding positions include 8-11, Lys-22, Gln-73, 78-79, 99-101, Gly-136, Glu-151, Asn-166, and Asn-224; these read LAAG, GT, and YGD. Asp-101 serves as a coordination point for Mg(2+). Position 224 (Asn-224) interacts with Mg(2+). Residues 227-247 are linker; it reads KQLSELERHYQLREARRLMAG. Residues 248 to 455 are N-acetyltransferase; the sequence is GVTLRDPARF…WKRPVKIRKD (208 aa). Residues Arg-330 and Lys-348 each coordinate UDP-N-acetyl-alpha-D-glucosamine. The active-site Proton acceptor is the His-360. UDP-N-acetyl-alpha-D-glucosamine contacts are provided by Tyr-363 and Asn-374. Residues Ala-377, 383–384, Ser-402, Ala-420, and Arg-437 contribute to the acetyl-CoA site; that span reads NY.

This sequence in the N-terminal section; belongs to the N-acetylglucosamine-1-phosphate uridyltransferase family. It in the C-terminal section; belongs to the transferase hexapeptide repeat family. In terms of assembly, homotrimer. It depends on Mg(2+) as a cofactor.

The protein localises to the cytoplasm. It carries out the reaction alpha-D-glucosamine 1-phosphate + acetyl-CoA = N-acetyl-alpha-D-glucosamine 1-phosphate + CoA + H(+). The catalysed reaction is N-acetyl-alpha-D-glucosamine 1-phosphate + UTP + H(+) = UDP-N-acetyl-alpha-D-glucosamine + diphosphate. It participates in nucleotide-sugar biosynthesis; UDP-N-acetyl-alpha-D-glucosamine biosynthesis; N-acetyl-alpha-D-glucosamine 1-phosphate from alpha-D-glucosamine 6-phosphate (route II): step 2/2. Its pathway is nucleotide-sugar biosynthesis; UDP-N-acetyl-alpha-D-glucosamine biosynthesis; UDP-N-acetyl-alpha-D-glucosamine from N-acetyl-alpha-D-glucosamine 1-phosphate: step 1/1. The protein operates within bacterial outer membrane biogenesis; LPS lipid A biosynthesis. Its function is as follows. Catalyzes the last two sequential reactions in the de novo biosynthetic pathway for UDP-N-acetylglucosamine (UDP-GlcNAc). The C-terminal domain catalyzes the transfer of acetyl group from acetyl coenzyme A to glucosamine-1-phosphate (GlcN-1-P) to produce N-acetylglucosamine-1-phosphate (GlcNAc-1-P), which is converted into UDP-GlcNAc by the transfer of uridine 5-monophosphate (from uridine 5-triphosphate), a reaction catalyzed by the N-terminal domain. The chain is Bifunctional protein GlmU from Pseudomonas savastanoi pv. phaseolicola (strain 1448A / Race 6) (Pseudomonas syringae pv. phaseolicola (strain 1448A / Race 6)).